We begin with the raw amino-acid sequence, 297 residues long: Bifunctional protein FolD (297 aa).

NADP(+)-binding positions include 166–168 (GRS), serine 191, and isoleucine 232.

Belongs to the tetrahydrofolate dehydrogenase/cyclohydrolase family. Homodimer.

It catalyses the reaction (6R)-5,10-methylene-5,6,7,8-tetrahydrofolate + NADP(+) = (6R)-5,10-methenyltetrahydrofolate + NADPH. The enzyme catalyses (6R)-5,10-methenyltetrahydrofolate + H2O = (6R)-10-formyltetrahydrofolate + H(+). It functions in the pathway one-carbon metabolism; tetrahydrofolate interconversion. Functionally, catalyzes the oxidation of 5,10-methylenetetrahydrofolate to 5,10-methenyltetrahydrofolate and then the hydrolysis of 5,10-methenyltetrahydrofolate to 10-formyltetrahydrofolate. This chain is Bifunctional protein FolD, found in Phenylobacterium zucineum (strain HLK1).